Reading from the N-terminus, the 148-residue chain is Phospholipase A2-alpha (148 aa).

A signal peptide spans 1–20 (MAAPIILFSFLLFFSVSVSA). 6 cysteine pairs are disulfide-bonded: C38/C66, C42/C72, C47/C122, C59/C79, C78/C105, and C85/C98. Ca(2+)-binding residues include Y58, G60, and Y63. H82 is a catalytic residue. Residue D83 participates in Ca(2+) binding.

It belongs to the phospholipase A2 family. Interacts with MYB30. It depends on Ca(2+) as a cofactor. In terms of tissue distribution, ubiquitous but expressed at a low level.

It localises to the secreted. Its subcellular location is the golgi apparatus. The protein localises to the cytoplasmic vesicle. It is found in the nucleus. It carries out the reaction a 1,2-diacyl-sn-glycero-3-phosphocholine + H2O = a 1-acyl-sn-glycero-3-phosphocholine + a fatty acid + H(+). Functionally, PA2 catalyzes the calcium-dependent hydrolysis of the 2-acyl groups in 3-sn-phosphoglycerides. Releases lysophospholipids (LPLs) and free fatty acids (FFAs) from membrane phospholipids in response to hormones and other external stimuli. Modulates the trafficking of PIN proteins to the plasma membrane. Negatively regulates MYB30 transcriptional activity and hypersensitive response control. The sequence is that of Phospholipase A2-alpha from Arabidopsis thaliana (Mouse-ear cress).